A 481-amino-acid chain; its full sequence is Glutamate--tRNA ligase (481 aa).

Residues 28–38 (PSPTGFLHLGG) carry the 'HIGH' region motif. Positions 139–148 (RYDGTWRPEP) are enriched in basic and acidic residues. The tract at residues 139–159 (RYDGTWRPEPGKTLPPVPADR) is disordered. The 'KMSKS' region motif lies at 260–264 (KLSKR). Lys-263 is a binding site for ATP.

The protein belongs to the class-I aminoacyl-tRNA synthetase family. Glutamate--tRNA ligase type 1 subfamily. In terms of assembly, monomer.

It localises to the cytoplasm. It carries out the reaction tRNA(Glu) + L-glutamate + ATP = L-glutamyl-tRNA(Glu) + AMP + diphosphate. Functionally, catalyzes the attachment of glutamate to tRNA(Glu) in a two-step reaction: glutamate is first activated by ATP to form Glu-AMP and then transferred to the acceptor end of tRNA(Glu). This Bordetella bronchiseptica (strain ATCC BAA-588 / NCTC 13252 / RB50) (Alcaligenes bronchisepticus) protein is Glutamate--tRNA ligase.